A 259-amino-acid polypeptide reads, in one-letter code: Protein-L-isoaspartate O-methyltransferase 1 (259 aa).

Ser109 is an active-site residue.

The protein belongs to the methyltransferase superfamily. L-isoaspartyl/D-aspartyl protein methyltransferase family.

The protein localises to the cytoplasm. It catalyses the reaction [protein]-L-isoaspartate + S-adenosyl-L-methionine = [protein]-L-isoaspartate alpha-methyl ester + S-adenosyl-L-homocysteine. Functionally, catalyzes the methyl esterification of L-isoaspartyl residues in peptides and proteins that result from spontaneous decomposition of normal L-aspartyl and L-asparaginyl residues. It plays a role in the repair and/or degradation of damaged proteins. This chain is Protein-L-isoaspartate O-methyltransferase 1, found in Cupriavidus necator (strain ATCC 17699 / DSM 428 / KCTC 22496 / NCIMB 10442 / H16 / Stanier 337) (Ralstonia eutropha).